A 328-amino-acid polypeptide reads, in one-letter code: tRNA uridine(34) hydroxylase (328 aa).

Residues 130–224 (LDEDTVVLDT…YGKDPEVQGE (95 aa)) enclose the Rhodanese domain. The active-site Cysteine persulfide intermediate is the Cys184.

Belongs to the TrhO family.

The enzyme catalyses uridine(34) in tRNA + AH2 + O2 = 5-hydroxyuridine(34) in tRNA + A + H2O. Catalyzes oxygen-dependent 5-hydroxyuridine (ho5U) modification at position 34 in tRNAs. The chain is tRNA uridine(34) hydroxylase from Streptococcus gordonii (strain Challis / ATCC 35105 / BCRC 15272 / CH1 / DL1 / V288).